Consider the following 512-residue polypeptide: Tabersonine 16-hydroxylase 2 (512 aa).

Residue Met1 is a topological domain, lumenal. A helical transmembrane segment spans residues 2-22 (ELYYFSTFAFLLFCFILAKTL). At 23–512 (KKSGQSNLKL…YSASSLKGKY (490 aa)) the chain is on the cytoplasmic side. Cys445 lines the heme pocket.

Belongs to the cytochrome P450 family. Requires heme as cofactor. In terms of tissue distribution, expressed at low levels in roots, fruits, stems, flower buds and flowers, but highly expressed in young leaves. Detected in adaxial and abaxial epidermis cells.

The protein resides in the endoplasmic reticulum membrane. It catalyses the reaction (-)-tabersonine + reduced [NADPH--hemoprotein reductase] + O2 = 16-hydroxytabersonine + oxidized [NADPH--hemoprotein reductase] + H2O + H(+). Its function is as follows. Involved in the foliar biosynthesis of vindoline, a precursor of vinblastine and vincristine. Hydroxylates specifically tabersonine, 2,3-dihydrotabersonine and 2,3-dihydro-3-hydroxytabersonine, but has no activity with naringenin, tryptamine, secologanin, strictosidine, ajmalicine, vindoline and catharanthine. The chain is Tabersonine 16-hydroxylase 2 from Catharanthus roseus (Madagascar periwinkle).